Reading from the N-terminus, the 314-residue chain is DNA-directed RNA polymerase subunit alpha (314 aa).

Positions 1-228 (MIEFEKPNIH…DHLSIFVNLT (228 aa)) are alpha N-terminal domain (alpha-NTD). The alpha C-terminal domain (alpha-CTD) stretch occupies residues 245 to 314 (KEKMLEMTIE…DLGLSLRKED (70 aa)).

The protein belongs to the RNA polymerase alpha chain family. Homodimer. The RNAP catalytic core consists of 2 alpha, 1 beta, 1 beta' and 1 omega subunit. When a sigma factor is associated with the core the holoenzyme is formed, which can initiate transcription.

It catalyses the reaction RNA(n) + a ribonucleoside 5'-triphosphate = RNA(n+1) + diphosphate. Functionally, DNA-dependent RNA polymerase catalyzes the transcription of DNA into RNA using the four ribonucleoside triphosphates as substrates. This is DNA-directed RNA polymerase subunit alpha from Lactiplantibacillus plantarum (strain ATCC BAA-793 / NCIMB 8826 / WCFS1) (Lactobacillus plantarum).